The chain runs to 466 residues: Amidase (466 aa).

Catalysis depends on charge relay system residues lysine 79 and serine 148. Residues 128–152 (YGRITPKSRNPRDPGRTPGGSSGGS) form a disordered region. Catalysis depends on serine 172, which acts as the Acyl-ester intermediate.

Belongs to the amidase family.

The catalysed reaction is a monocarboxylic acid amide + H2O = a monocarboxylate + NH4(+). This is Amidase from Pseudomonas putida (Arthrobacter siderocapsulatus).